A 675-amino-acid polypeptide reads, in one-letter code: Cysteine-rich receptor-like protein kinase 25 (675 aa).

An N-terminal signal peptide occupies residues methionine 1–serine 25. Topologically, residues aspartate 26–asparagine 281 are extracellular. Gnk2-homologous domains lie at threonine 28–isoleucine 134 and isoleucine 140–phenylalanine 247. Asparagine 36, asparagine 43, asparagine 77, asparagine 106, asparagine 131, asparagine 151, asparagine 161, asparagine 188, asparagine 249, and asparagine 281 each carry an N-linked (GlcNAc...) asparagine glycan. The helical transmembrane segment at leucine 282–alanine 302 threads the bilayer. Over methionine 303–arginine 675 the chain is Cytoplasmic. Residues phenylalanine 347–threonine 622 enclose the Protein kinase domain. ATP-binding positions include leucine 353–valine 361 and lysine 375. At tyrosine 420 the chain carries Phosphotyrosine. Aspartate 472 (proton acceptor) is an active-site residue. Phosphoserine is present on serine 476. Residue threonine 512 is modified to Phosphothreonine. At tyrosine 520 the chain carries Phosphotyrosine. The interval methionine 638–proline 661 is disordered. Residues glycine 648–proline 661 show a composition bias toward polar residues.

The protein belongs to the protein kinase superfamily. Ser/Thr protein kinase family. CRK subfamily.

It is found in the membrane. It catalyses the reaction L-seryl-[protein] + ATP = O-phospho-L-seryl-[protein] + ADP + H(+). The enzyme catalyses L-threonyl-[protein] + ATP = O-phospho-L-threonyl-[protein] + ADP + H(+). This Arabidopsis thaliana (Mouse-ear cress) protein is Cysteine-rich receptor-like protein kinase 25 (CRK25).